We begin with the raw amino-acid sequence, 485 residues long: ATP synthase subunit beta (485 aa).

170–177 provides a ligand contact to ATP; it reads GGAGVGKT.

Belongs to the ATPase alpha/beta chains family. In terms of assembly, F-type ATPases have 2 components, CF(1) - the catalytic core - and CF(0) - the membrane proton channel. CF(1) has five subunits: alpha(3), beta(3), gamma(1), delta(1), epsilon(1). CF(0) has three main subunits: a(1), b(2) and c(9-12). The alpha and beta chains form an alternating ring which encloses part of the gamma chain. CF(1) is attached to CF(0) by a central stalk formed by the gamma and epsilon chains, while a peripheral stalk is formed by the delta and b chains.

It localises to the cell membrane. It catalyses the reaction ATP + H2O + 4 H(+)(in) = ADP + phosphate + 5 H(+)(out). Functionally, produces ATP from ADP in the presence of a proton gradient across the membrane. The catalytic sites are hosted primarily by the beta subunits. The polypeptide is ATP synthase subunit beta (Salinispora arenicola (strain CNS-205)).